A 164-amino-acid polypeptide reads, in one-letter code: Peptide methionine sulfoxide reductase MsrA (164 aa).

Residue Cys16 is part of the active site.

This sequence belongs to the MsrA Met sulfoxide reductase family.

It carries out the reaction L-methionyl-[protein] + [thioredoxin]-disulfide + H2O = L-methionyl-(S)-S-oxide-[protein] + [thioredoxin]-dithiol. It catalyses the reaction [thioredoxin]-disulfide + L-methionine + H2O = L-methionine (S)-S-oxide + [thioredoxin]-dithiol. In terms of biological role, has an important function as a repair enzyme for proteins that have been inactivated by oxidation. Catalyzes the reversible oxidation-reduction of methionine sulfoxide in proteins to methionine. This chain is Peptide methionine sulfoxide reductase MsrA, found in Clostridium tetani (strain Massachusetts / E88).